The chain runs to 192 residues: Protein GrpE (192 aa).

This sequence belongs to the GrpE family. Homodimer.

Its subcellular location is the cytoplasm. Participates actively in the response to hyperosmotic and heat shock by preventing the aggregation of stress-denatured proteins, in association with DnaK and GrpE. It is the nucleotide exchange factor for DnaK and may function as a thermosensor. Unfolded proteins bind initially to DnaJ; upon interaction with the DnaJ-bound protein, DnaK hydrolyzes its bound ATP, resulting in the formation of a stable complex. GrpE releases ADP from DnaK; ATP binding to DnaK triggers the release of the substrate protein, thus completing the reaction cycle. Several rounds of ATP-dependent interactions between DnaJ, DnaK and GrpE are required for fully efficient folding. This Neisseria gonorrhoeae (strain ATCC 700825 / FA 1090) protein is Protein GrpE.